The sequence spans 539 residues: T-complex protein 1 subunit delta (539 aa).

Positions 1–28 (MPENVASRSGPPAAGPGNRGKGAYQDRD) are disordered. At Arg19 the chain carries Omega-N-methylarginine. N6-acetyllysine is present on Lys21. Ser36 bears the Phosphoserine mark. Gly53 contacts ADP. Gly53 serves as a coordination point for ATP. Asp104 lines the Mg(2+) pocket. The ADP site is built by Gly105, Thr106, Thr107, Ser108, Asn172, Ser173, and Lys174. 2 residues coordinate ATP: Gly105 and Thr106. Lys174 provides a ligand contact to ATP. 2 positions are modified to phosphoserine: Ser184 and Ser202. Residues Lys288, Lys302, Lys319, and Lys326 each carry the N6-acetyllysine modification. Gly425 contacts ADP. Ser444 is modified (phosphoserine). Gln510 is a binding site for ADP.

This sequence belongs to the TCP-1 chaperonin family. In terms of assembly, component of the chaperonin-containing T-complex (TRiC), a hexadecamer composed of two identical back-to-back stacked rings enclosing a protein folding chamber. Each ring is made up of eight different subunits: TCP1/CCT1, CCT2, CCT3, CCT4, CCT5, CCT6A/CCT6, CCT7, CCT8. Interacts with PACRG. Interacts with DNAAF4. Interacts with DLEC1.

It localises to the cytoplasm. It is found in the melanosome. Its subcellular location is the cytoskeleton. The protein localises to the microtubule organizing center. The protein resides in the centrosome. It localises to the cilium basal body. It catalyses the reaction ATP + H2O = ADP + phosphate + H(+). Component of the chaperonin-containing T-complex (TRiC), a molecular chaperone complex that assists the folding of actin, tubulin and other proteins upon ATP hydrolysis. The TRiC complex mediates the folding of WRAP53/TCAB1, thereby regulating telomere maintenance. As part of the TRiC complex may play a role in the assembly of BBSome, a complex involved in ciliogenesis regulating transports vesicles to the cilia. This is T-complex protein 1 subunit delta (Cct4) from Rattus norvegicus (Rat).